Reading from the N-terminus, the 124-residue chain is MATINQLVRKPRSRKVAKSDVPALQGCPQRRGVCTRVYTTTPKKPNSALRKVCRVRLTNGYEVTSYIGGEGHNLQEHSVVLIRGGRVKDLPGVRYHTVRGTLDTAGVNDRRQGRSKYGAKRGKS.

The tract at residues 1–22 (MATINQLVRKPRSRKVAKSDVP) is disordered. A 3-methylthioaspartic acid modification is found at D89. Residues 104 to 124 (TAGVNDRRQGRSKYGAKRGKS) are disordered. Positions 113–124 (GRSKYGAKRGKS) are enriched in basic residues.

This sequence belongs to the universal ribosomal protein uS12 family. As to quaternary structure, part of the 30S ribosomal subunit. Contacts proteins S8 and S17. May interact with IF1 in the 30S initiation complex.

Its function is as follows. With S4 and S5 plays an important role in translational accuracy. Functionally, interacts with and stabilizes bases of the 16S rRNA that are involved in tRNA selection in the A site and with the mRNA backbone. Located at the interface of the 30S and 50S subunits, it traverses the body of the 30S subunit contacting proteins on the other side and probably holding the rRNA structure together. The combined cluster of proteins S8, S12 and S17 appears to hold together the shoulder and platform of the 30S subunit. The sequence is that of Small ribosomal subunit protein uS12 from Hahella chejuensis (strain KCTC 2396).